Reading from the N-terminus, the 396-residue chain is Probable porphobilinogen deaminase (396 aa).

Residues 159-224 are disordered; that stretch reads APALHREHER…DTASSSEFEQ (66 aa). Residues 159–245 form an insert region; it reads APALHREHER…LQQSAMERDP (87 aa). A compositionally biased stretch (basic and acidic residues) spans 162-189; that stretch reads LHREHERRTEAEKEAQSRDAREQRRGDY. The segment covering 200–215 has biased composition (acidic residues); it reads LDTEDGEEGAADDGDD. Residue C328 is modified to S-(dipyrrolylmethanemethyl)cysteine.

It belongs to the HMBS family. The cofactor is dipyrromethane.

The enzyme catalyses 4 porphobilinogen + H2O = hydroxymethylbilane + 4 NH4(+). It participates in porphyrin-containing compound metabolism; protoporphyrin-IX biosynthesis; coproporphyrinogen-III from 5-aminolevulinate: step 2/4. Its function is as follows. Tetrapolymerization of the monopyrrole PBG into the hydroxymethylbilane pre-uroporphyrinogen in several discrete steps. This chain is Probable porphobilinogen deaminase (hemC), found in Halobacterium salinarum (strain ATCC 700922 / JCM 11081 / NRC-1) (Halobacterium halobium).